Here is a 37-residue protein sequence, read N- to C-terminus: Myo-inositol-binding protein (37 aa).

This sequence belongs to the bacterial solute-binding protein 2 family.

The protein localises to the periplasm. The protein is Myo-inositol-binding protein of Pseudomonas sp.